The chain runs to 790 residues: Phenylalanine--tRNA ligase beta subunit (790 aa).

Residues 39 to 154 (PDSLNTVVTG…ADTPLGESAC (116 aa)) form the tRNA-binding domain. Residues 404-483 (FSPLSLSVRP…FVQKTQKILP (80 aa)) enclose the B5 domain. Residues Asp-457, Asp-463, Glu-466, and Glu-467 each contribute to the Mg(2+) site. One can recognise an FDX-ACB domain in the interval 694–790 (PIYPASSRDI…KLANIGQGNS (97 aa)).

It belongs to the phenylalanyl-tRNA synthetase beta subunit family. Type 1 subfamily. In terms of assembly, tetramer of two alpha and two beta subunits. Requires Mg(2+) as cofactor.

The protein resides in the cytoplasm. The enzyme catalyses tRNA(Phe) + L-phenylalanine + ATP = L-phenylalanyl-tRNA(Phe) + AMP + diphosphate + H(+). The polypeptide is Phenylalanine--tRNA ligase beta subunit (pheT) (Chlamydia trachomatis serovar D (strain ATCC VR-885 / DSM 19411 / UW-3/Cx)).